Consider the following 1088-residue polypeptide: RNA-directed RNA polymerase (1088 aa).

Residues 501 to 687 (LSYGDVTRFL…AKRYIAGGKI (187 aa)) form the RdRp catalytic domain.

This sequence belongs to the reoviridae RNA-directed RNA polymerase family. As to quaternary structure, interacts with VP3 (Potential). Interacts with VP2; this interaction activates VP1. Interacts with NSP5; this interaction is probably necessary for the formation of functional virus factories. Interacts with NSP2; this interaction is weak. Mg(2+) is required as a cofactor.

It is found in the virion. It catalyses the reaction RNA(n) + a ribonucleoside 5'-triphosphate = RNA(n+1) + diphosphate. Functionally, RNA-directed RNA polymerase that is involved in both transcription and genome replication. Together with VP3 capping enzyme, forms an enzyme complex positioned near the channels situated at each of the five-fold vertices of the core. Following infection, the outermost layer of the virus is lost, leaving a double-layered particle (DLP) made up of the core and VP6 shell. VP1 then catalyzes the transcription of fully conservative plus-strand genomic RNAs that are extruded through the DLP's channels into the cytoplasm where they function as mRNAs for translation of viral proteins. One copy of each of the viral (+)RNAs is also recruited during core assembly, together with newly synthesized polymerase complexes and VP2. The polymerase of these novo-formed particles catalyzes the synthesis of complementary minus-strands leading to dsRNA formation. To do so, the polymerase specifically recognizes and binds 4 bases 5'-UGUG-3' in the conserved 3'-sequence of plus-strand RNA templates. VP2 presumably activates the autoinhibited VP1-RNA complex to coordinate packaging and genome replication. Once dsRNA synthesis is complete, the polymerase switches to the transcriptional mode, thus providing secondary transcription. In Rotavirus A (strain RVA/Cow/United States/NCDV-Lincoln/1969/G6P6[1]) (RV-A), this protein is RNA-directed RNA polymerase.